We begin with the raw amino-acid sequence, 1203 residues long: MTVMSLSRDLKDDFHSDTVLSILNEQRIRGILCDVTIIVEDTKFKAHSNVLAASSLYFKNIFWSHTICISSHVLELDDLKAEVFTEILNYIYSSTVVVRRQETVTDLAAAGKRLGISFLEDLSDRNFSNSPGPYVVCITEKGVVKEEKNEKRHEEPAVTNGPRITNAFSIIETENSNSMFSPLDLRASFKKVSDAMRTTSLCQERASVCPEAEPVRTLAEHSYAVSSITEAYRSQPLREHDSSSSSGKTGKENGEALTTKAKPCRKPKTQTQDSDSTTENMPLPLVTCPEVNQERSPQPAPILSHSEPPSSEGDVHFPREDENQPSETPGPPAAEVPPLVYNCSCCSKSFDSSTLLGAHMQLHKPTQDPFVCKYCNKQFTTLNRLDRHEQICMRSSHMPMPGGNQPFLENYPTIGQDGGSFTSPDSLVPESRIGELSSAGSALSDADHMVKFVNGQMLYSCVVCKRSYVTLSSLRRHANVHSWRRTYPCHYCNKVFALAEYRTRHEIWHTGERRYQCIFCLETFMTYYILKNHQKSFHAIDHRLSISKKTANGGLKPTVYPYKLYRLLPMRCKRAPYKSYRNSSYESAQGNRQRNESPPDTFVIPNLPSSEMPTLNFQDGRNSLTSSPAIPVETPSWQGTPTSAKVKNAEGLKWRKQALKTDLVDSAEVSISSIGNSVSTTLQAEPVCVSSGEHSASVISYSGLVPSVIVHSSQFSSVIKHSNAIACLANSNHQSPSQPVASPSLIKDSKPEADKASKLASRPKNSKEKKKTVPCNRGEITEEAKYVADLGGSSGKTTNVVEETSKIETYIAKPALPGTSTNSNVAPLCQITVKIGNEAIVKRHILGSKLFYKRGRKPKYQMQEETLPRESDPETRGDSPLGLCQADCVEMSEAFDEVSDQDSTDKPWRPYYNYKPKKKSKQLRKIRKVKWRKERGSRSPVGRRRYPAELDRAEMGRRRYPAELDRCAEVKLPPDKASEEEENKEMPKLQCELCDGDKAAGAGAEGKPHQHLTLKPYICELCAKQFQSSSTLKMHMRCHTGEKPYQCKTCGRRFSVQGNLQKHERIHLGVKEFICQYCNKAFTLNETLKIHERIHTGEKRYHCQFCFQGFLYLSTKRNHERRHVREHDGKGFACFQCPKICKTAAALRMHQKKHLFKTLTKQEETDDLCHENSDLLESQPCTDSEDSDQKDDIKKPLLKMSFE.

In terms of domain architecture, BTB spans 33–100 (CDVTIIVEDT…IYSSTVVVRR (68 aa)). Lys-43 is covalently cross-linked (Glycyl lysine isopeptide (Lys-Gly) (interchain with G-Cter in SUMO2)). Ser-130 carries the phosphoserine modification. Glycyl lysine isopeptide (Lys-Gly) (interchain with G-Cter in SUMO2) cross-links involve residues Lys-145, Lys-148, Lys-151, and Lys-260. The segment at 230 to 334 (EAYRSQPLRE…PSETPGPPAA (105 aa)) is disordered. Over residues 269 to 280 (TQTQDSDSTTEN) the composition is skewed to polar residues. Residues 299–522 (PAPILSHSEP…RRYQCIFCLE (224 aa)) are interaction with CBFA2T3. Over residues 313–322 (GDVHFPREDE) the composition is skewed to basic and acidic residues. Residues 341–363 (YNCSCCSKSFDSSTLLGAHMQLH) form a C2H2-type 1 zinc finger. The C2H2-type 2; degenerate zinc-finger motif lies at 370–394 (FVCKYCNKQFTTLNRLDRHEQICMR). 3 C2H2-type zinc fingers span residues 459-481 (YSCVVCKRSYVTLSSLRRHANVH), 487-509 (YPCHYCNKVFALAEYRTRHEIWH), and 515-538 (YQCIFCLETFMTYYILKNHQKSFH). Glycyl lysine isopeptide (Lys-Gly) (interchain with G-Cter in SUMO2) cross-links involve residues Lys-549 and Lys-556. 4 stretches are compositionally biased toward polar residues: residues 581–598 (RNSSYESAQGNRQRNESP), 607–628 (LPSSEMPTLNFQDGRNSLTSSP), 635–644 (PSWQGTPTSA), and 731–741 (SNHQSPSQPVA). Disordered stretches follow at residues 581 to 644 (RNSS…PTSA) and 731 to 776 (SNHQ…VPCN). Basic and acidic residues predominate over residues 747–757 (KDSKPEADKAS). Glycyl lysine isopeptide (Lys-Gly) (interchain with G-Cter in SUMO2) cross-links involve residues Lys-750, Lys-755, Lys-796, Lys-806, Lys-813, Lys-834, Lys-842, and Lys-849. 2 disordered regions span residues 857–882 (KPKYQMQEETLPRESDPETRGDSPLG) and 895–914 (FDEVSDQDSTDKPWRPYYNY). The segment covering 866-877 (TLPRESDPETRG) has biased composition (basic and acidic residues). Residues Lys-915, Lys-971, Lys-976, Lys-984, Lys-988, Lys-998, Lys-1024, and Lys-1033 each participate in a glycyl lysine isopeptide (Lys-Gly) (interchain with G-Cter in SUMO2) cross-link. 5 C2H2-type zinc fingers span residues 1017-1039 (YICELCAKQFQSSSTLKMHMRCH), 1045-1067 (YQCKTCGRRFSVQGNLQKHERIH), 1073-1095 (FICQYCNKAFTLNETLKIHERIH), 1101-1123 (YHCQFCFQGFLYLSTKRNHERRH), and 1132-1154 (FACFQCPKICKTAAALRMHQKKH). Residues Lys-1116, Lys-1139, Lys-1142, Lys-1157, and Lys-1190 each participate in a glycyl lysine isopeptide (Lys-Gly) (interchain with G-Cter in SUMO2) cross-link. The disordered stretch occupies residues 1172–1203 (NSDLLESQPCTDSEDSDQKDDIKKPLLKMSFE).

Interacts with CBFA2T3, ZBTB4 and RBBP6. Post-translationally, ubiquitinated by RBBP6; leading to its degradation by the proteasome. Widely expressed throughout the adult brain where it is found mainly in neurons. Also expressed in the adrenal medulla. Not detected in non-neural tissues including heart, spleen, liver and muscle. In the embryo, expressed in the developing brain and spinal cord but not in the migratory neural crest. Also expressed in the limbs, transiently in somites, and in the embryonic liver. In the embryonic neural tube, expression is restricted to late postmitotic neurons.

It is found in the nucleus. It localises to the chromosome. Its function is as follows. Transcriptional regulator with bimodal DNA-binding specificity. Binds with a higher affinity to methylated CpG dinucleotides in the consensus sequence 5'-CGCG-3' but can also bind to E-box elements (5'-CACGTG-3'). Can also bind specifically to a single methyl-CpG pair. Represses transcription in a methyl-CpG-dependent manner. Plays an important role in regulating DNA-replication and common fragile sites (CFS) stability in a RBBP6- and MCM10-dependent manner; represses expression of MCM10 which plays an important role in DNA-replication. Acts as a transcriptional activator. May be involved in the differentiation and/or survival of late postmitotic neurons. The sequence is that of Zinc finger and BTB domain-containing protein 38 from Rattus norvegicus (Rat).